The following is a 185-amino-acid chain: ATP-dependent protease subunit HslV (185 aa).

The active site involves threonine 12. Na(+)-binding residues include alanine 168, cysteine 171, and threonine 174.

Belongs to the peptidase T1B family. HslV subfamily. As to quaternary structure, a double ring-shaped homohexamer of HslV is capped on each side by a ring-shaped HslU homohexamer. The assembly of the HslU/HslV complex is dependent on binding of ATP.

The protein resides in the cytoplasm. It catalyses the reaction ATP-dependent cleavage of peptide bonds with broad specificity.. Its activity is regulated as follows. Allosterically activated by HslU binding. In terms of biological role, protease subunit of a proteasome-like degradation complex believed to be a general protein degrading machinery. In Cereibacter sphaeroides (strain ATCC 17023 / DSM 158 / JCM 6121 / CCUG 31486 / LMG 2827 / NBRC 12203 / NCIMB 8253 / ATH 2.4.1.) (Rhodobacter sphaeroides), this protein is ATP-dependent protease subunit HslV.